Consider the following 440-residue polypeptide: Xaa-Pro dipeptidase (440 aa).

Residues Asp-244, Asp-255, His-335, Glu-380, and Glu-419 each coordinate Mn(2+).

Belongs to the peptidase M24B family. Bacterial-type prolidase subfamily. Mn(2+) serves as cofactor.

It catalyses the reaction Xaa-L-Pro dipeptide + H2O = an L-alpha-amino acid + L-proline. Functionally, splits dipeptides with a prolyl residue in the C-terminal position. This is Xaa-Pro dipeptidase from Shewanella halifaxensis (strain HAW-EB4).